The following is a 209-amino-acid chain: Glutathione S-transferase F7 (209 aa).

The GST N-terminal domain occupies 2–83; the sequence is AGIKVFGHPA…YIAHFYSDKG (82 aa). Glutathione contacts are provided by residues 12–13, 41–42, 54–55, and 67–68; these read ST, HK, KV, and ES. Residues 90 to 209 form the GST C-terminal domain; that stretch reads GSKDIAGIAM…TSRPSAKKVL (120 aa).

Belongs to the GST superfamily. Phi family.

The protein localises to the cytoplasm. Its subcellular location is the cytosol. The catalysed reaction is RX + glutathione = an S-substituted glutathione + a halide anion + H(+). Functionally, may be involved in the conjugation of reduced glutathione to a wide number of exogenous and endogenous hydrophobic electrophiles and have a detoxification role against certain herbicides. The chain is Glutathione S-transferase F7 from Arabidopsis thaliana (Mouse-ear cress).